The following is a 269-amino-acid chain: Fructose permease IIC component (269 aa).

One can recognise a PTS EIIC type-4 domain in the interval 1–234 (MSSLQIILLL…GALGLCLALL (234 aa)). 7 consecutive transmembrane segments (helical) span residues 2 to 22 (SSLQIILLLIIAAITGIASVL), 35 to 54 (TLVGLVLGDLKTGIILGGTL), 64 to 86 (VGLAMAPDTAIASVISTILVITA), 90 to 110 (IGEGIAVAVALAAAGQALTIF), 149 to 169 (VMIPTLIVALISVSAVQAFLG), 181 to 201 (IGGGIIVVVGYAMVINMMNIP), and 206 to 226 (FFYIGFLLAAFTDFNLVGFGA).

The protein resides in the cell membrane. Its function is as follows. The phosphoenolpyruvate-dependent sugar phosphotransferase system (PTS), a major carbohydrate active -transport system, catalyzes the phosphorylation of incoming sugar substrates concomitant with their translocation across the cell membrane. This system is involved in fructose transport. The chain is Fructose permease IIC component (levF) from Bacillus subtilis (strain 168).